The primary structure comprises 167 residues: tRNA-specific adenosine deaminase (167 aa).

The CMP/dCMP-type deaminase domain maps to Phe-6–Leu-117. Zn(2+) is bound at residue His-57. Glu-59 serves as the catalytic Proton donor. Residues Cys-87 and Cys-90 each contribute to the Zn(2+) site.

It belongs to the cytidine and deoxycytidylate deaminase family. In terms of assembly, homodimer. Zn(2+) is required as a cofactor.

It catalyses the reaction adenosine(34) in tRNA + H2O + H(+) = inosine(34) in tRNA + NH4(+). Its function is as follows. Catalyzes the deamination of adenosine to inosine at the wobble position 34 of tRNA(Arg2). This is tRNA-specific adenosine deaminase from Escherichia coli O157:H7.